Reading from the N-terminus, the 443-residue chain is Phosphatidate cytidylyltransferase 2 (443 aa).

The segment covering 1–38 (MTELRQRAVREDAPPEDKESESEAKLDGETASDSESRA) has biased composition (basic and acidic residues). The interval 1–51 (MTELRQRAVREDAPPEDKESESEAKLDGETASDSESRAETAPPPTSIDDTP) is disordered. Ser20 is subject to Phosphoserine. Phosphothreonine is present on Thr30. 3 positions are modified to phosphoserine: Ser32, Ser34, and Ser36. Thr50 bears the Phosphothreonine mark. 6 helical membrane passes run 78 to 98 (MIAFFFIIIYLGPMVLMMIVM), 129 to 149 (WYFLLCVNYFFYGETVTDYFF), 165 to 185 (HRFISFTLYLTGFCMFVLSLV), 212 to 232 (LVIHNLFEGMIWFIVPISCVI), 261 to 281 (GFIGGFFATVVFGLLLSYVMS), and 338 to 358 (SALSTFASLIGPFGGFFASGF).

The protein belongs to the CDS family. In terms of assembly, homodimer.

It is found in the endoplasmic reticulum membrane. It carries out the reaction a 1,2-diacyl-sn-glycero-3-phosphate + CTP + H(+) = a CDP-1,2-diacyl-sn-glycerol + diphosphate. The enzyme catalyses 1-octadecanoyl-2-(5Z,8Z,11Z,14Z-eicosatetraenoyl)-sn-glycero-3-phosphate + CTP + H(+) = 1-octadecanoyl-2-(5Z,8Z,11Z,14Z-eicosatetraenoyl)-sn-glycero-3-cytidine-5'-diphosphate + diphosphate. It catalyses the reaction 1-octadecanoyl-2-(9Z,12Z-octadecadienoyl)-sn-glycero-3-phosphate + CTP + H(+) = 1-octadecanoyl-2-(9Z,12Z-octadecadienoyl)-sn-glycero-3-cytidine-5'-diphosphate + diphosphate. The catalysed reaction is 1-hexadecanoyl-2-(5Z,8Z,11Z,14Z-eicosatetraenoyl)-sn-glycero-3-phosphate + CTP + H(+) = 1-hexadecanoyl-2-(5Z,8Z,11Z,14Z-eicosatetraenoyl)-sn-glycero-3-cytidine-5'-diphosphate + diphosphate. It carries out the reaction 1,2-di-(5Z,8Z,11Z,14Z)-eicosatetraenoyl-sn-glycero-3-phosphate + CTP + H(+) = 1,2-di-(5Z,8Z,11Z,14Z-eicosatetraenoyl)-sn-glycero-3-cytidine-5'-diphosphate + diphosphate. The enzyme catalyses 1-octadecanoyl-2-(9Z-octadecenoyl)-sn-glycero-3-phosphate + CTP + H(+) = 1-octadecanoyl-2-(9Z-octadecenoyl)-sn-glycero-3-cytidine-5'-diphosphate + diphosphate. It catalyses the reaction 1-octadecanoyl-2-(4Z,7Z,10Z,13Z,16Z,19Z-docosahexaenoyl)-sn-glycero-3-phosphate + CTP + H(+) = 1-octadecanoyl-2-(4Z,7Z,10Z,13Z,16Z,19Z-docosahexaenoyl)-sn-glycero-3-cytidine-5'-diphosphate + diphosphate. The catalysed reaction is 1,2-di-(9Z,12Z-octadecadienoyl)-sn-glycero-3-phosphate + CTP + H(+) = 1,2-di-(9Z,12Z-octadecadienoyl)-sn-glycero-3-cytidine-5'-diphosphate + diphosphate. It carries out the reaction 1,2-di-(9Z-octadecenoyl)-sn-glycero-3-phosphate + CTP + H(+) = 1,2-di-(9Z-octadecenoyl)-sn-glycero-3-cytidine-5'-diphosphate + diphosphate. It participates in phospholipid metabolism; CDP-diacylglycerol biosynthesis; CDP-diacylglycerol from sn-glycerol 3-phosphate: step 3/3. Functionally, catalyzes the conversion of phosphatidic acid (PA) to CDP-diacylglycerol (CDP-DAG), an essential intermediate in the synthesis of phosphatidylglycerol, cardiolipin and phosphatidylinositol. Exhibits specificity for the nature of the acyl chains at the sn-1 and sn-2 positions in the substrate, PA and the preferred acyl chain composition is 1-stearoyl-2-arachidonoyl-sn-phosphatidic acid. Plays an important role in regulating the growth and maturation of lipid droplets which are storage organelles at the center of lipid and energy homeostasis. In Rattus norvegicus (Rat), this protein is Phosphatidate cytidylyltransferase 2.